Reading from the N-terminus, the 635-residue chain is 1-deoxy-D-xylulose-5-phosphate synthase (635 aa).

Thiamine diphosphate contacts are provided by residues histidine 74 and 115–117 (AHS). Residue aspartate 146 participates in Mg(2+) binding. Residues 147–148 (GA), asparagine 176, tyrosine 283, and glutamate 365 contribute to the thiamine diphosphate site. Position 176 (asparagine 176) interacts with Mg(2+).

It belongs to the transketolase family. DXPS subfamily. In terms of assembly, homodimer. The cofactor is Mg(2+). Requires thiamine diphosphate as cofactor.

It catalyses the reaction D-glyceraldehyde 3-phosphate + pyruvate + H(+) = 1-deoxy-D-xylulose 5-phosphate + CO2. The protein operates within metabolic intermediate biosynthesis; 1-deoxy-D-xylulose 5-phosphate biosynthesis; 1-deoxy-D-xylulose 5-phosphate from D-glyceraldehyde 3-phosphate and pyruvate: step 1/1. Functionally, catalyzes the acyloin condensation reaction between C atoms 2 and 3 of pyruvate and glyceraldehyde 3-phosphate to yield 1-deoxy-D-xylulose-5-phosphate (DXP). This chain is 1-deoxy-D-xylulose-5-phosphate synthase, found in Polaromonas sp. (strain JS666 / ATCC BAA-500).